Consider the following 137-residue polypeptide: Small ribosomal subunit protein uS9 (137 aa).

Belongs to the universal ribosomal protein uS9 family.

This Sulfurisphaera tokodaii (strain DSM 16993 / JCM 10545 / NBRC 100140 / 7) (Sulfolobus tokodaii) protein is Small ribosomal subunit protein uS9 (rps9).